The sequence spans 657 residues: UvrABC system protein B (657 aa).

Residues alanine 24 to arginine 409 form the Helicase ATP-binding domain. Residue glycine 37–threonine 44 participates in ATP binding. The Beta-hairpin signature appears at tyrosine 90–isoleucine 113. The Helicase C-terminal domain maps to glutamine 426–isoleucine 589. Residues glutamate 617–glutamine 652 enclose the UVR domain.

Belongs to the UvrB family. In terms of assembly, forms a heterotetramer with UvrA during the search for lesions. Interacts with UvrC in an incision complex.

The protein localises to the cytoplasm. Functionally, the UvrABC repair system catalyzes the recognition and processing of DNA lesions. A damage recognition complex composed of 2 UvrA and 2 UvrB subunits scans DNA for abnormalities. Upon binding of the UvrA(2)B(2) complex to a putative damaged site, the DNA wraps around one UvrB monomer. DNA wrap is dependent on ATP binding by UvrB and probably causes local melting of the DNA helix, facilitating insertion of UvrB beta-hairpin between the DNA strands. Then UvrB probes one DNA strand for the presence of a lesion. If a lesion is found the UvrA subunits dissociate and the UvrB-DNA preincision complex is formed. This complex is subsequently bound by UvrC and the second UvrB is released. If no lesion is found, the DNA wraps around the other UvrB subunit that will check the other stand for damage. The sequence is that of UvrABC system protein B from Chlamydia pneumoniae (Chlamydophila pneumoniae).